The primary structure comprises 599 residues: MKNIRNFSIIAHIDHGKSTLSDRIIQICGGLSDREMEAQVLDSMDLERERGITIKAQSVTLDYKASDGETYQLNFIDTPGHVDFSYEVSRSLAACEGALLVVDAGQGVEAQTLANCYTAMEMDLEVVPVLNKIDLPAADPERVAEEIEDIVGIDATDAVRCSAKTGVGVQDVLERLVRDIPPPEGDPEGSLQALIIDSWFDNYLGVVSLIRIKNGTLRKGDKVKVMSTGQTYNADRLGIFTPKQVDRTELKCGEVGWLVCAIKDIHGAPVGDTLTLARNPAEKALPGFKKVKPQVYAGLFPVSSDDYEAFRDALGKLSLNDASLFYEPESSSALGFGFRCGFLGLLHMEIIQERLEREYDLDLITTAPTVVYEVETTSREVIYVDSPSKLPAVNNIYELREPIAECHMLLPQAYLGNVITLCVEKRGVQTNMVYHGNQVALTYEIPMAEVVLDFFDRLKSTSRGYASLDYNFKRFQASDMVRVDVLINGERVDALALITHRDNSQNRGRELVEKMKDLIPRQQFDIAIQAAIGTHIIARSTVKQLRKNVLAKCYGGDISRKKKLLQKQKEGKKRMKQIGNVELPQEAFLAILHVGKDNK.

Residues 2-184 form the tr-type G domain; that stretch reads KNIRNFSIIA…RLVRDIPPPE (183 aa). Residues 14–19 and 131–134 each bind GTP; these read DHGKST and NKID.

The protein belongs to the TRAFAC class translation factor GTPase superfamily. Classic translation factor GTPase family. LepA subfamily.

The protein localises to the cell inner membrane. The catalysed reaction is GTP + H2O = GDP + phosphate + H(+). Required for accurate and efficient protein synthesis under certain stress conditions. May act as a fidelity factor of the translation reaction, by catalyzing a one-codon backward translocation of tRNAs on improperly translocated ribosomes. Back-translocation proceeds from a post-translocation (POST) complex to a pre-translocation (PRE) complex, thus giving elongation factor G a second chance to translocate the tRNAs correctly. Binds to ribosomes in a GTP-dependent manner. The polypeptide is Elongation factor 4 (Shigella sonnei (strain Ss046)).